Here is a 762-residue protein sequence, read N- to C-terminus: Polyribonucleotide nucleotidyltransferase (762 aa).

Positions 531 and 537 each coordinate Mg(2+). The region spanning 597–656 (PRVTTIKVPVDKIGEVIGPKGKVINSITEETRAQISIEDDGTVFVGATDGPSAQAAIDKI) is the KH domain. Residues 668-737 (GERFLGTVVK…KRGKISLVLV (70 aa)) enclose the S1 motif domain.

This sequence belongs to the polyribonucleotide nucleotidyltransferase family. Mg(2+) serves as cofactor.

The protein localises to the cytoplasm. It carries out the reaction RNA(n+1) + phosphate = RNA(n) + a ribonucleoside 5'-diphosphate. Involved in mRNA degradation. Catalyzes the phosphorolysis of single-stranded polyribonucleotides processively in the 3'- to 5'-direction. The chain is Polyribonucleotide nucleotidyltransferase from Mycobacterium ulcerans (strain Agy99).